Consider the following 758-residue polypeptide: Probable TonB-dependent receptor NMB0964 (758 aa).

The first 24 residues, 1–24, serve as a signal peptide directing secretion; it reads MAQTTLKPIVLSILLINTPLLAQA. A TBDR plug domain is found at 50–161; sequence LLHTSTASDK…VAGLVDVADG (112 aa). Positions 171–758 constitute a TBDR beta-barrel domain; sequence GVSGELGLRL…SFTGGVNVKF (588 aa). The TonB C-terminal box motif lies at 741-758; it reads SDTPQMGRSFTGGVNVKF.

It belongs to the TonB-dependent receptor family.

Its subcellular location is the cell outer membrane. Functionally, probable receptor, TonB-dependent. The protein is Probable TonB-dependent receptor NMB0964 of Neisseria meningitidis serogroup B (strain ATCC BAA-335 / MC58).